Here is a 297-residue protein sequence, read N- to C-terminus: MNIAIRNPVPIRREEGSLQVALDPADRIETAKVFAVYGKGGIGKSTTSSNLSVAFSKLGKRVLQIGCDPKHDSTFTLTKRLAPTVIDALESVNFHSEELRPEDFVVEGFNGVKCVEAGGPPAGTGCGGYVVGQTVKLLKEHHLLEDTDVVVFDVLGDVVCGGFASPLQHADRALIVTANDFDSIFAMNRIVAAIHSKSKNYGVRLGGVIANRSAKTDEIDRFNAAVGLRRLAHFPDLDVVRRSRLKKSTLFEMEPSPELKAVTDEYMQLAETLWAGADPCEAVPMKDRDLFEFLGFD.

ATP is bound by residues 41 to 46 and K70; that span reads GIGKST. Position 45 (S45) interacts with Mg(2+). The [4Fe-4S] cluster site is built by C126 and C160. Residues 211-212 and 235-237 contribute to the ATP site; these read NR and PDL.

The protein belongs to the NifH/BchL/ChlL family. As to quaternary structure, homodimer. Protochlorophyllide reductase is composed of three subunits; BchL, BchN and BchB. [4Fe-4S] cluster is required as a cofactor.

The enzyme catalyses chlorophyllide a + oxidized 2[4Fe-4S]-[ferredoxin] + 2 ADP + 2 phosphate = protochlorophyllide a + reduced 2[4Fe-4S]-[ferredoxin] + 2 ATP + 2 H2O. It functions in the pathway porphyrin-containing compound metabolism; bacteriochlorophyll biosynthesis (light-independent). Its function is as follows. Component of the dark-operative protochlorophyllide reductase (DPOR) that uses Mg-ATP and reduced ferredoxin to reduce ring D of protochlorophyllide (Pchlide) to form chlorophyllide a (Chlide). This reaction is light-independent. The L component serves as a unique electron donor to the NB-component of the complex, and binds Mg-ATP. In Methylorubrum populi (strain ATCC BAA-705 / NCIMB 13946 / BJ001) (Methylobacterium populi), this protein is Light-independent protochlorophyllide reductase iron-sulfur ATP-binding protein.